Here is a 423-residue protein sequence, read N- to C-terminus: MTITQPDLSVFETVESEVRSYCRGWPTVFDRAVGSRMYDEDGHEYLDFFAGAGSLNYGHNNAVLKRALIDYLERDGVTHGLDMSTTAKRRFLETFQNTILRPRDLPYKVMFPGPTGTNAVESALKLARKVKGRESIVSFTNAFHGMSLGSLAVTGNAFKRAGAGIPLVHGTPMPFDNYFDGTVEDFIWFERLLEDQGSGLNKPAAVIVETVQGEGGINVARAEWLRALADLCERQDMLLIVDDIQMGCGRTGAFFSFEEAGITPDIVTVSKSISGYGMPMALTLFKPELDVWEPGEHNGTFRGNNPAFVTATATLEAYWADGSAMEKQTRKRGEQVEQHMIAITEENLADVKEYRGRGLVWGLEFHDKDRAGRVAKRAFELGLLIETSGPESEVVKLLPALTITPDELDEGMKTLARAVRETA.

Lys-271 is subject to N6-(pyridoxal phosphate)lysine.

Belongs to the class-III pyridoxal-phosphate-dependent aminotransferase family. Requires pyridoxal 5'-phosphate as cofactor.

It catalyses the reaction L-2,4-diaminobutanoate + 2-oxoglutarate = L-aspartate 4-semialdehyde + L-glutamate. Its pathway is amine and polyamine biosynthesis; ectoine biosynthesis; L-ectoine from L-aspartate 4-semialdehyde: step 1/3. In terms of biological role, catalyzes reversively the conversion of L-aspartate beta-semialdehyde (ASA) to L-2,4-diaminobutyrate (DABA) by transamination with L-glutamate. The polypeptide is Diaminobutyrate--2-oxoglutarate transaminase (ectB) (Streptomyces coelicolor (strain ATCC BAA-471 / A3(2) / M145)).